A 490-amino-acid chain; its full sequence is GTPase Der (490 aa).

EngA-type G domains lie at 3-166 and 196-369; these read PVIA…PRDE and IKIA…KSAV. Residues 9–16, 56–60, 118–121, 202–209, 249–253, and 314–317 each bind GTP; these read GRPNVGKS, DTGGI, NKID, DTAGV, and NKWD. The 85-residue stretch at 370-454 folds into the KH-like domain; sequence TRWPTSRLTQ…PIRIEFKGGE (85 aa). The interval 452-490 is disordered; that stretch reads GGENPYEGNKNTLTDRQVNKKRRMMSHHKKADKKRRDKR. Over residues 470-490 the composition is skewed to basic residues; sequence NKKRRMMSHHKKADKKRRDKR.

Belongs to the TRAFAC class TrmE-Era-EngA-EngB-Septin-like GTPase superfamily. EngA (Der) GTPase family. In terms of assembly, associates with the 50S ribosomal subunit.

Functionally, GTPase that plays an essential role in the late steps of ribosome biogenesis. The polypeptide is GTPase Der (Pseudomonas syringae pv. syringae (strain B728a)).